A 360-amino-acid chain; its full sequence is Probable protein phosphatase 2C 54 (360 aa).

The disordered stretch occupies residues 1 to 39 (MCVEESEGAERLDFGEPAAAAADAGKSKSKSPDELPSPR). The PPM-type phosphatase domain maps to 65–325 (RSGDWSDIGG…DNLTAVLVSF (261 aa)). Mn(2+) contacts are provided by D109, G110, D273, and D316.

The protein belongs to the PP2C family. Mg(2+) is required as a cofactor. Requires Mn(2+) as cofactor.

It carries out the reaction O-phospho-L-seryl-[protein] + H2O = L-seryl-[protein] + phosphate. The catalysed reaction is O-phospho-L-threonyl-[protein] + H2O = L-threonyl-[protein] + phosphate. In Oryza sativa subsp. japonica (Rice), this protein is Probable protein phosphatase 2C 54.